A 378-amino-acid chain; its full sequence is Succinyl-diaminopimelate desuccinylase (378 aa).

His-68 provides a ligand contact to Zn(2+). Residue Asp-70 is part of the active site. Residue Asp-101 participates in Zn(2+) binding. Glu-135 serves as the catalytic Proton acceptor. Residues Glu-136, Glu-164, and His-350 each coordinate Zn(2+).

It belongs to the peptidase M20A family. DapE subfamily. As to quaternary structure, homodimer. Zn(2+) is required as a cofactor. The cofactor is Co(2+).

It carries out the reaction N-succinyl-(2S,6S)-2,6-diaminopimelate + H2O = (2S,6S)-2,6-diaminopimelate + succinate. It functions in the pathway amino-acid biosynthesis; L-lysine biosynthesis via DAP pathway; LL-2,6-diaminopimelate from (S)-tetrahydrodipicolinate (succinylase route): step 3/3. Catalyzes the hydrolysis of N-succinyl-L,L-diaminopimelic acid (SDAP), forming succinate and LL-2,6-diaminopimelate (DAP), an intermediate involved in the bacterial biosynthesis of lysine and meso-diaminopimelic acid, an essential component of bacterial cell walls. The protein is Succinyl-diaminopimelate desuccinylase of Vibrio atlanticus (strain LGP32) (Vibrio splendidus (strain Mel32)).